Reading from the N-terminus, the 205-residue chain is MAQLYFYYSAMNAGKSTALLQSSYNYQERGMRTVVYTAEIDDRFGAGKVSSRIGLSSPAKLFNQNSSLFDEIRAEHEQQAIHCVLVDECQFLTRQQVYELSEVVDQLDIPVLCYGLRTDFRGELFIGSQYLLAWSDKLVELKTICFCGRKASMVLRLDQAGRPYNEGEQVVIGGNERYVSVCRKHYKEALQVDSLTAIQERHRHD.

ATP contacts are provided by residues 9–16 and 87–90; these read SAMNAGKS and DECQ. The Proton acceptor role is filled by Glu88. Positions 145, 147, 182, and 185 each coordinate Zn(2+).

Belongs to the thymidine kinase family. Homotetramer.

Its subcellular location is the cytoplasm. It catalyses the reaction thymidine + ATP = dTMP + ADP + H(+). With respect to regulation, allosteric enzyme which is feedback inhibited by dTTP and activated by a number of dNDP and dNTP. Functionally, phosphorylates both thymidine and deoxyuridine. The sequence is that of Thymidine kinase from Escherichia coli (strain K12).